We begin with the raw amino-acid sequence, 699 residues long: Extracellular matrix protein 2 (699 aa).

The N-terminal stretch at 1–20 (MKIAVLFCFFLLIIFQTDFG) is a signal peptide. Residues 101–158 (GHCLVKGITMYNKAVWSPEPCTTCLCSDGRVLCDETMCHPQRCPQTVIPEGECCPVCS) enclose the VWFC domain. The span at 176–186 (EFSGDSSEQRE) shows a compositional bias: basic and acidic residues. Residues 176-316 (EFSGDSSEQR…PAPPRGTLRL (141 aa)) form a disordered region. Over residues 212–224 (QSEEDEEVKEEDT) the composition is skewed to acidic residues. Residues 243-260 (GDSRGGDRKQRPGEERRL) show a composition bias toward basic and acidic residues. The span at 270-291 (EEEEDEEEEGEEGEEDEEDEED) shows a compositional bias: acidic residues. The Cell attachment site motif lies at 294-296 (RGD). In terms of domain architecture, LRRNT spans 307–344 (PAPPRGTLRLPSGCSLSYRTISCINAMLTQIPPLTAPQ). LRR repeat units lie at residues 368 to 388 (NLERLDLSKNNITSSGIGPKA), 394 to 415 (KLMRLNMDGNNLIQIPSQLPST), 416 to 436 (LEELKVNENNLQAIDEESLSD), 439 to 459 (QLVTLELEGNNLSEANVNPLA), 465 to 484 (SLAYLRLGKNKFRIIPQGLP), 486 to 507 (SIEELYLENNQIEEITEICFNH), 510 to 530 (KINVIVLRYNKIEENRIAPLA), 536 to 557 (NLESIDLSYNKLYHVPSYLPKS), 558 to 578 (LLHLVLLGNQIERIPGYVFGH), 582 to 602 (GLEYLYLSFNKLADDGMDRVS), 609 to 630 (SLRELFLDHNDLKSIPPGIQEM), 632 to 653 (ALHFLRLNNNKIRNILPEEICN), and 661 to 684 (NLEHLHLENNYIKIREIPSYTFSC). Asparagine 378 carries an N-linked (GlcNAc...) asparagine glycan. Asparagine 449 is a glycosylation site (N-linked (GlcNAc...) asparagine). An N-linked (GlcNAc...) asparagine glycan is attached at asparagine 506.

The protein belongs to the small leucine-rich proteoglycan (SLRP) family. SLRP class I subfamily. In terms of assembly, interacts with numerous extracellular matrix proteins. Interacts with MSL1 and RASSF1. Expressed predominantly in adipose tissue as well as female-specific organs such as mammary gland, ovary, and uterus.

It is found in the secreted. It localises to the extracellular space. The protein resides in the extracellular matrix. Its function is as follows. Promotes matrix assembly and cell adhesiveness. This Homo sapiens (Human) protein is Extracellular matrix protein 2 (ECM2).